The chain runs to 310 residues: Probable manganese-dependent inorganic pyrophosphatase (310 aa).

6 residues coordinate Mn(2+): His9, Asp13, Asp15, Asp76, His98, and Asp150.

The protein belongs to the PPase class C family. Requires Mn(2+) as cofactor.

The protein resides in the cytoplasm. It carries out the reaction diphosphate + H2O = 2 phosphate + H(+). The polypeptide is Probable manganese-dependent inorganic pyrophosphatase (Streptococcus thermophilus (strain CNRZ 1066)).